A 356-amino-acid chain; its full sequence is Protein RecA (356 aa).

Residue 68–75 coordinates ATP; it reads GPESSGKT.

It belongs to the RecA family.

The protein localises to the cytoplasm. Functionally, can catalyze the hydrolysis of ATP in the presence of single-stranded DNA, the ATP-dependent uptake of single-stranded DNA by duplex DNA, and the ATP-dependent hybridization of homologous single-stranded DNAs. It interacts with LexA causing its activation and leading to its autocatalytic cleavage. This chain is Protein RecA, found in Clostridium botulinum (strain Alaska E43 / Type E3).